A 134-amino-acid polypeptide reads, in one-letter code: uncharacterized protein (134 aa).

It belongs to the orthopoxviruses B21 protein family.

This is an uncharacterized protein from Bos taurus (Bovine).